We begin with the raw amino-acid sequence, 129 residues long: Glycerol-3-phosphate cytidylyltransferase (129 aa).

Residues 9–10 (TF) and 14–17 (HYGH) contribute to the CTP site. Residue Lys-44 coordinates substrate. Position 46 (Lys-46) interacts with CTP. Position 77 (Lys-77) interacts with substrate. 113–120 (RTDGISTT) is a binding site for CTP.

Belongs to the cytidylyltransferase family. Homodimer.

It localises to the cytoplasm. It catalyses the reaction sn-glycerol 3-phosphate + CTP + H(+) = CDP-glycerol + diphosphate. The protein operates within cell wall biogenesis; poly(ribitol phosphate) teichoic acid biosynthesis. Functionally, catalyzes the transfer of the cytidylyl group of CTP to sn-glycerol 3-phosphate so the activated glycerol 3-phosphate can be used for teichoic acid synthesis, via incorporation into both the linkage unit by TarB and TarF. The polypeptide is Glycerol-3-phosphate cytidylyltransferase (tarD) (Bacillus spizizenii (strain ATCC 23059 / NRRL B-14472 / W23) (Bacillus subtilis subsp. spizizenii)).